The chain runs to 48 residues: Small, acid-soluble spore protein O (48 aa).

Positions 1-23 are disordered; it reads MTKRKANHVINGMNAAKSQGNGA.

The protein belongs to the SspO family.

Its subcellular location is the spore core. The protein is Small, acid-soluble spore protein O of Bacillus pumilus (strain SAFR-032).